A 338-amino-acid chain; its full sequence is MLSALARPAGAALRRSFSTSAQNNAKVAVLGASGGIGQPLSLLLKNSPLVSRLTLYDIAHTPGVAADLSHIETRATVKGYLGPEQLPDCLKGCDVVVIPAGVPRKPGMTRDDLFNTNATIVATLTAACAQHCPEAMICIISNPVNSTIPITAEVFKKHGVYNPNKIFGVTTLDIVRANAFVAELKDLDPARVNVPVIGGHAGKTIIPLISQCTPKVEFPQDQLTTLTGRIQEAGTEVVKAKAGAGSATLSMAYAGARFVFSLVDAMNGKEGVVECSFVKSQETDCPYFSTPLLLGKKGIEKNLGIGKVSPFEEKMIAEAIPELKASIKKGEEFVKNMK.

Residues 1–24 (MLSALARPAGAALRRSFSTSAQNN) constitute a mitochondrion transit peptide. Residues 31-37 (GASGGIG) and Asp57 each bind NAD(+). O-linked (GlcNAc) serine glycosylation is present at Ser33. Lys78 and Lys91 each carry N6-acetyllysine; alternate. Lys78 and Lys91 each carry N6-succinyllysine; alternate. Arg104 and Arg110 together coordinate substrate. NAD(+)-binding positions include Asn117 and 140 to 142 (ISN). Asn142 contacts substrate. Residue Lys165 is modified to N6-acetyllysine. Residue Arg176 coordinates substrate. An N6-acetyllysine; alternate modification is found at Lys185. Lys185 carries the post-translational modification N6-succinyllysine; alternate. His200 acts as the Proton acceptor in catalysis. Lys203 carries the N6-succinyllysine modification. N6-acetyllysine; alternate is present on residues Lys215 and Lys239. N6-succinyllysine; alternate is present on residues Lys215 and Lys239. Lys239 is modified (N6-malonyllysine; alternate). The residue at position 246 (Ser246) is a Phosphoserine. Met251 contacts NAD(+). An N6-succinyllysine modification is found at Lys269. An N6-acetyllysine; alternate mark is found at Lys296, Lys301, Lys307, Lys314, and Lys324. An N6-succinyllysine; alternate mark is found at Lys296, Lys301, Lys307, Lys314, and Lys324. Position 307 is an N6-malonyllysine; alternate (Lys307). Residue Ser326 is modified to Phosphoserine. N6-acetyllysine; alternate is present on residues Lys328, Lys329, and Lys335. Lys328 is subject to N6-succinyllysine; alternate. Residue Lys329 is modified to N6-malonyllysine; alternate. Lys335 is modified (N6-succinyllysine; alternate).

Belongs to the LDH/MDH superfamily. MDH type 1 family. In terms of assembly, homodimer. In terms of processing, acetylation is enhanced after treatment either with trichostin A (TCA) or with nicotinamide (NAM) with the appearance of tri- and tetraacetylations. Glucose also increases acetylation.

It localises to the mitochondrion matrix. The enzyme catalyses (S)-malate + NAD(+) = oxaloacetate + NADH + H(+). With respect to regulation, enzyme activity is enhanced by acetylation. The chain is Malate dehydrogenase, mitochondrial (MDH2) from Bos taurus (Bovine).